The chain runs to 378 residues: Lysocardiolipin acyltransferase 1 (378 aa).

The next 2 helical transmembrane spans lie at 9 to 29 (FVVA…GPFL) and 46 to 66 (IVAT…GAKV). The short motif at 85-90 (HRTRMD) is the HXXXXD motif element. 2 helical membrane-spanning segments follow: residues 302–322 (LRVL…PMGT) and 336–358 (FAAM…LIEL).

Belongs to the 1-acyl-sn-glycerol-3-phosphate acyltransferase family.

The protein resides in the endoplasmic reticulum membrane. The enzyme catalyses a 1-acyl-sn-glycero-3-phosphate + an acyl-CoA = a 1,2-diacyl-sn-glycero-3-phosphate + CoA. The catalysed reaction is a 1-acyl-sn-glycero-3-phospho-(1D-myo-inositol) + an acyl-CoA = a 1,2-diacyl-sn-glycero-3-phospho-(1D-myo-inositol) + CoA. It catalyses the reaction 1-acyl-sn-glycero-3-phospho-(1'-sn-glycerol) + an acyl-CoA = a 1,2-diacyl-sn-glycero-3-phospho-(1'-sn-glycerol) + CoA. It carries out the reaction 1-hexadecanoyl-sn-glycero-3-phosphate + (9Z)-octadecenoyl-CoA = 1-hexadecanoyl-2-(9Z-octadecenoyl)-sn-glycero-3-phosphate + CoA. The enzyme catalyses 1-(9Z-octadecenoyl)-sn-glycero-3-phosphate + (9Z)-octadecenoyl-CoA = 1,2-di-(9Z-octadecenoyl)-sn-glycero-3-phosphate + CoA. The catalysed reaction is 1-(9Z,12Z)-octadecadienoyl-sn-glycero-3-phosphate + (9Z)-octadecenoyl-CoA = 1-(9Z,12Z)-octadecadienoyl-2-(9Z)-octadecenoyl-sn-glycero-3-phosphate + CoA. It catalyses the reaction 1-(9Z,12Z,15Z)-octadecatrienoyl-sn-glycero-3-phosphate + (9Z)-octadecenoyl-CoA = 1-(9Z,12Z,15Z)-octadecatrienoyl-2-(9Z)-octadecenoyl-sn-glycero-3-phosphate + CoA. It carries out the reaction 1-(9Z-octadecenoyl)-sn-glycero-3-phosphate + hexadecanoyl-CoA = 1-(9Z)-octadecenoyl-2-hexadecanoyl-sn-glycero-3-phosphate + CoA. The enzyme catalyses 1-(9Z-octadecenoyl)-sn-glycero-3-phosphate + octadecanoyl-CoA = 1-(9Z-octadecenoyl)-2-octadecanoyl-sn-glycero-3-phosphate + CoA. The catalysed reaction is 1-acyl-sn-glycero-3-phospho-(1'-sn-glycerol) + (9Z)-octadecenoyl-CoA = 1-acyl-2-(9Z-octadecenoyl)-sn-glycero-3-phospho-(1'-sn-glycerol) + CoA. It catalyses the reaction a 1-acyl-sn-glycero-3-phospho-(1D-myo-inositol) + (9Z)-octadecenoyl-CoA = a 1-acyl-2-(9Z-octadecenoyl)-sn-glycero-3-phospho-(1D-myo-inositol) + CoA. It carries out the reaction 1-hexadecanoyl-sn-glycero-3-phospho-(1D-myo-inositol) + hexadecanoyl-CoA = 1,2-dihexadecanoyl-sn-glycero-3-phospho-(1D-myo-inositol) + CoA. The enzyme catalyses 1-hexadecanoyl-sn-glycero-3-phospho-(1D-myo-inositol) + octadecanoyl-CoA = 1-hexadecanoyl-2-octadecanoyl-sn-glycero-3-phospho-(1D-myo-inositol) + CoA. The catalysed reaction is 1-hexadecanoyl-sn-glycero-3-phospho-(1D-myo-inositol) + (9Z)-octadecenoyl-CoA = 1-hexadecanoyl-2-(9Z-octadecenoyl)-sn-glycero-3-phospho-(1D-myo-inositol) + CoA. It catalyses the reaction 1-hexadecanoyl-sn-glycero-3-phospho-(1D-myo-inositol) + (9Z,12Z)-octadecadienoyl-CoA = 1-hexadecanoyl-2-(9Z,12Z-octadecadienoyl)-sn-glycero-3-phospho-(1D-myo-inositol) + CoA. It carries out the reaction 1-hexadecanoyl-sn-glycero-3-phospho-(1D-myo-inositol) + (5Z,8Z,11Z,14Z)-eicosatetraenoyl-CoA = 1-hexadecanoyl-2-(5Z,8Z,11Z,14Z-eicosatetraenoyl)-sn-glycero-3-phospho-D-myo-inositol + CoA. The enzyme catalyses 1-hexadecanoyl-sn-glycero-3-phospho-(1'-sn-glycerol) + hexadecanoyl-CoA = 1,2-dihexadecanoyl-sn-glycero-3-phospho-(1'-sn-glycerol) + CoA. The catalysed reaction is 1-hexadecanoyl-sn-glycero-3-phospho-(1'-sn-glycerol) + octadecanoyl-CoA = 1-hexadecanoyl-2-octadecanoyl-sn-glycero-3-phospho-(1'-sn-glycerol) + CoA. It catalyses the reaction 1-hexadecanoyl-sn-glycero-3-phospho-(1'-sn-glycerol) + (9Z)-octadecenoyl-CoA = 1-hexadecanoyl-2-(9Z-octadecenoyl)-sn-glycero-3-phospho-(1'-sn-glycerol) + CoA. It carries out the reaction 1-hexadecanoyl-sn-glycero-3-phospho-(1'-sn-glycerol) + (9Z,12Z)-octadecadienoyl-CoA = 1-hexadecanoyl-2-(9Z,12Z-octadecadienoyl)-sn-glycero-3-phospho-(1'-sn-glycerol) + CoA. The enzyme catalyses 1-tetradecanoyl-sn-glycero-3-phospho-(1'-sn-glycerol) + (9Z)-octadecenoyl-CoA = 1-tetradecanoyl-2-(9Z-octadecenoyl)-sn-glycero-3-phospho-(1'-sn-glycerol) + CoA. The catalysed reaction is 1-octadecanoyl-sn-glycero-3-phospho-(1'-sn-glycerol) + (9Z)-octadecenoyl-CoA = 1-octadecanoyl-2-(9Z-octadecenoyl)-sn-glycero-3-phospho-(1'-sn-glycerol) + CoA. It catalyses the reaction 1-(9Z-octadecenoyl)-sn-glycero-3-phospho-(1'-sn-glycerol) + (9Z)-octadecenoyl-CoA = 1,2-di-(9Z-octadecenoyl)-sn-glycero-3-phospho-(1'-sn-glycerol) + CoA. It carries out the reaction 1-hexadecanoyl-sn-glycero-3-phospho-(1D-myo-inositol) + dodecanoyl-CoA = 1-hexadecanoyl-2-dodecanoyl-sn-glycero-3-phospho-(1D-myo-inositol) + CoA. The enzyme catalyses 1',3'-bis-[1-acyl-sn-glycero-3-phospho]-glycerol + (9Z)-octadecenoyl-CoA = 1'-[1-acyl-2-(9Z)-octadecenoyl-sn-glycero-3-phospho],3'-[1-acyl,2-hydroxy-sn-glycero-3-phospho]-glycerol + CoA. The catalysed reaction is 1'-[1,2-diacyl-sn-glycero-3-phospho],3'-[1-acyl-sn-glycero-3-phospho]-glycerol + (9Z)-octadecenoyl-CoA = 1'-[1,2-diacyl-sn-glycero-3-phospho],3'-[1-acyl,2-(9Z)-octadecenoyl-sn-glycero-3-phospho]-glycerol + CoA. It catalyses the reaction 1'-[1,2-diacyl-sn-glycero-3-phospho],3'-[1-acyl-sn-glycero-3-phospho]-glycerol + (9Z,12Z)-octadecadienoyl-CoA = 1'-[1,2-diacyl-sn-glycero-3-phospho],3'-[1-acyl,2-(9Z,12Z)-octadecadienoyl-sn-glycero-3-phospho]-glycerol + CoA. It carries out the reaction 1'-[1,2-diacyl-sn-glycero-3-phospho],3'-[1-acyl-sn-glycero-3-phospho]-glycerol + dodecanoyl-CoA = 1'-[1,2-diacyl-sn-glycero-3-phospho],3'-[1-acyl,2-dodecanoyl-sn-glycero-3-phospho]-glycerol + CoA. The enzyme catalyses 1',3'-bis-[1-acyl-sn-glycero-3-phospho]-glycerol + dodecanoyl-CoA = 1'-[1-acyl-2-dodecanoyl-sn-glycero-3-phospho],3'-[1-acyl,2-hydroxy-sn-glycero-3-phospho]-glycerol + CoA. The catalysed reaction is a 1-acyl-sn-glycero-3-phosphate + (9Z)-octadecenoyl-CoA = a 1-acyl-2-(9Z-octadecenoyl)-sn-glycero-3-phosphate + CoA. It catalyses the reaction 1',3'-bis-[1-acyl-sn-glycero-3-phospho]-glycerol + (9Z,12Z)-octadecadienoyl-CoA = 1'-[1-acyl-2-(9Z,12Z)-octadecadienoyl-sn-glycero-3-phospho],3'-[1-acyl,2-hydroxy-sn-glycero-3-phospho]-glycerol + CoA. It carries out the reaction 1',3'-bis-[1-acyl-sn-glycero-3-phospho]-glycerol + hexadecanoyl-CoA = 1'-[1-acyl-2-hexadecanoyl-sn-glycero-3-phospho],3'-[1-acyl,2-hydroxy-sn-glycero-3-phospho]-glycerol + CoA. The enzyme catalyses 1',3'-bis-[1-acyl-sn-glycero-3-phospho]-glycerol + octadecanoyl-CoA = 1'-[1-acyl-2-octadecanoyl-sn-glycero-3-phospho],3'-[1-acyl,2-hydroxy-sn-glycero-3-phospho]-glycerol + CoA. The catalysed reaction is 1'-[1,2-diacyl-sn-glycero-3-phospho],3'-[1-acyl-sn-glycero-3-phospho]-glycerol + octanoyl-CoA = 1'-[1,2-diacyl-sn-glycero-3-phospho],3'-[1-acyl,2-octanoyl-sn-glycero-3-phospho]-glycerol + CoA. It catalyses the reaction 1',3'-bis-[1-acyl-sn-glycero-3-phospho]-glycerol + octanoyl-CoA = 1'-[1-acyl-2-octanoyl-sn-glycero-3-phospho],3'-[1-acyl,2-hydroxy-sn-glycero-3-phospho]-glycerol + CoA. It carries out the reaction 1'-[1,2-diacyl-sn-glycero-3-phospho],3'-[1-acyl-sn-glycero-3-phospho]-glycerol + hexadecanoyl-CoA = 1'-[1,2-diacyl-sn-glycero-3-phospho],3'-[1-acyl,2-hexadecanoyl-sn-glycero-3-phospho]-glycerol + CoA. The enzyme catalyses 1'-[1,2-diacyl-sn-glycero-3-phospho],3'-[1-acyl-sn-glycero-3-phospho]-glycerol + (5Z,8Z,11Z,14Z)-eicosatetraenoyl-CoA = 1'-[1,2-diacyl-sn-glycero-3-phospho],3'-[1-acyl,2-(5Z,8Z,11Z,14Z)-eicosatetraenoyl-sn-glycero-3-phospho]-glycerol + CoA. The catalysed reaction is 1',3'-bis-[1-acyl-sn-glycero-3-phospho]-glycerol + (5Z,8Z,11Z,14Z)-eicosatetraenoyl-CoA = 1'-[1-acyl-2-(5Z,8Z,11Z,14Z)-eicosatetraenoyl-sn-glycero-3-phospho],3'-[1-acyl,2-hydroxy-sn-glycero-3-phospho]-glycerol + CoA. It catalyses the reaction a 1-acyl-sn-glycero-3-phospho-(1D-myo-inositol) + octadecanoyl-CoA = a 1-acyl-2-octadecanoyl-sn-glycero-3-phospho-(1D-myo-inositol) + CoA. It carries out the reaction a 2-acyl-sn-glycero-3-phospho-D-myo-inositol + octadecanoyl-CoA = 1-octadecanoyl-2-acyl-sn-glycero-3-phospho-1D-myo-inositol + CoA. Its pathway is phospholipid metabolism; CDP-diacylglycerol biosynthesis; CDP-diacylglycerol from sn-glycerol 3-phosphate: step 2/3. Functionally, exhibits acyl-CoA:lysocardiolipin acyltransferase (ALCAT) activity; catalyzes the reacylation of lyso-cardiolipin to cardiolipin (CL), a key step in CL remodeling. Recognizes both monolysocardiolipin and dilysocardiolipin as substrates with a preference for linoleoyl-CoA and oleoyl-CoA as acyl donors. Also exhibits 1-acyl-sn-glycerol-3-phosphate acyltransferase activity (AGPAT) activity; converts 1-acyl-sn-glycerol-3- phosphate (lysophosphatidic acid or LPA) into 1,2-diacyl-sn-glycerol-3- phosphate (phosphatidic acid or PA) by incorporating an acyl moiety at the sn-2 position of the glycerol backbone. Possesses both lysophosphatidylinositol acyltransferase (LPIAT) and lysophosphatidylglycerol acyltransferase (LPGAT) activities. Required for establishment of the hematopoietic and endothelial lineages. This Gallus gallus (Chicken) protein is Lysocardiolipin acyltransferase 1 (LCLAT1).